The sequence spans 90 residues: MKTAIFTVVLALAVFAVLSFGWEANEKALSEEFTELIHEKEAASETEARECRYFWGECHDPMPCCDWLVCRYKWPITYNICVWNRTFPEK.

The first 19 residues, 1–19 (MKTAIFTVVLALAVFAVLS), serve as a signal peptide directing secretion. The propeptide occupies 20-50 (FGWEANEKALSEEFTELIHEKEAASETEARE). Disulfide bonds link Cys-51–Cys-65, Cys-58–Cys-70, and Cys-64–Cys-81.

This sequence belongs to the neurotoxin 10 (Hwtx-1) family. 13 (Hntx-13) subfamily. Expressed by the venom gland.

The protein resides in the secreted. Ion channel inhibitor. This is U7-theraphotoxin-Hhn1l from Cyriopagopus hainanus (Chinese bird spider).